We begin with the raw amino-acid sequence, 237 residues long: MRFSPELEQGRLLVRYKRFLADIETDSGELLTIHCPNTGSMLNCMMPGGRVWFSRSNDPKRKLPGTWEISETPQGRLACINTGRANTLVEEALRAGVIRELEGFTALKREVAYGQEKSRVDFRLEYPDGYLYLEVKSVTLGFADSAVAAFPDAVTQRGARHLRELATLAREGVRAVLLYCVNLTGIEAVRPAKEIDPAYAAALREAVDAGVQILAYGVQLTPEAVYIDRHLEVHWPD.

The protein belongs to the SfsA family.

The polypeptide is Sugar fermentation stimulation protein homolog (Pseudomonas syringae pv. tomato (strain ATCC BAA-871 / DC3000)).